The following is a 321-amino-acid chain: Ribonuclease Z (321 aa).

Zn(2+) is bound by residues His62, His64, Asp66, His67, His139, Asp209, and His268. Asp66 (proton acceptor) is an active-site residue.

This sequence belongs to the RNase Z family. Homodimer. It depends on Zn(2+) as a cofactor.

It carries out the reaction Endonucleolytic cleavage of RNA, removing extra 3' nucleotides from tRNA precursor, generating 3' termini of tRNAs. A 3'-hydroxy group is left at the tRNA terminus and a 5'-phosphoryl group is left at the trailer molecule.. Its function is as follows. Zinc phosphodiesterase, which displays some tRNA 3'-processing endonuclease activity. Probably involved in tRNA maturation, by removing a 3'-trailer from precursor tRNA. The sequence is that of Ribonuclease Z from Pseudomonas putida (strain W619).